The sequence spans 831 residues: Protein ADP-ribosyltransferase PARP3 (831 aa).

A disordered region spans residues 1–69; it reads MVHETRSRTL…KKLKAEESDL (69 aa). 2 stretches are compositionally biased toward basic and acidic residues: residues 15-32 and 43-66; these read EEGK…KEQE and KTAD…KAEE. Residues 49 to 199 enclose the PADR1 zinc-binding domain; it reads EHDGEQEPSK…NKYPKRNLDD (151 aa). Residues 124–168 are zinc ribbon; that stretch reads GPLDKCPVCGGQLECKGLKYNCTGTHSEWACCSFSTNNPSRRGGP. The Zn(2+) site is built by Cys-129, Cys-132, Cys-145, and Cys-155. Positions 200-290 constitute a BRCT domain; that stretch reads EGIFSGMMIA…EKQPLAAYDI (91 aa). The region spanning 338-439 is the WGR domain; sequence GGHIYEKDGI…KKFKKKCMKM (102 aa). The PARP alpha-helical domain occupies 466–585; the sequence is HCKLDPSVTF…DINVASRLIG (120 aa). The 234-residue stretch at 594–827 folds into the PARP catalytic domain; sequence DPLSQCYKKL…VKYEEQNMEV (234 aa).

It belongs to the ARTD/PARP family.

It is found in the nucleus. It carries out the reaction L-aspartyl-[protein] + NAD(+) = 4-O-(ADP-D-ribosyl)-L-aspartyl-[protein] + nicotinamide. It catalyses the reaction L-glutamyl-[protein] + NAD(+) = 5-O-(ADP-D-ribosyl)-L-glutamyl-[protein] + nicotinamide. Involved in the base excision repair (BER) pathway, by catalyzing the poly(ADP-ribosyl)ation of a limited number of acceptor proteins involved in chromatin architecture and in DNA metabolism. This modification follows DNA damages and appears as an obligatory step in a detection/signaling pathway leading to the reparation of DNA strand breaks. In Oryza sativa subsp. japonica (Rice), this protein is Protein ADP-ribosyltransferase PARP3 (PARP3).